We begin with the raw amino-acid sequence, 690 residues long: Ligand of Numb protein X 2 (690 aa).

The segment at 50-88 (CHICLQPLLQPLDTPCGHTFCYKCLRNFLQEKDFCPLDR) adopts an RING-type zinc-finger fold. The segment at 198-224 (STWSEEPGLDNPAFEESAGADTTQQPL) is disordered. The NPXY motif motif lies at 208–211 (NPAF). PDZ domains are found at residues 233–318 (TIEI…LRER), 339–422 (QVAL…ARPG), 468–554 (HITV…KALE), and 600–688 (DIVL…WPGS). Residues 418 to 455 (IARPGKPQPGNTIREAGNHSSSSQHHTPPPYYSRPSSH) are disordered.

As to quaternary structure, interacts with the phosphotyrosine interaction domain of NUMB.

This is Ligand of Numb protein X 2 (LNX2) from Homo sapiens (Human).